An 849-amino-acid chain; its full sequence is Serine/threonine-protein phosphatase 4 regulatory subunit 3B (849 aa).

The region spanning 1 to 100 (MSDTRRRVKV…DEIWEKICQV (100 aa)) is the WH1 domain. Phosphoserine occurs at positions 117 and 695. Residues 714–724 (EMWFNEDEEEE) are compositionally biased toward acidic residues. Residues 714-849 (EMWFNEDEEE…SPRKRPRLGS (136 aa)) form a disordered region. Basic and acidic residues predominate over residues 733–764 (EKPKPEDDFPDNYEKFMETKKAKESEDKENLP). Residues 776-818 (FSHSASAANGTNSKSVVAQIPPATSNGSSSKTTNLPTSVTATK) show a composition bias toward polar residues. Residues 827-838 (YPDDEEEDEEEE) are compositionally biased toward acidic residues. The residue at position 840 (Ser840) is a Phosphoserine.

The protein belongs to the SMEK family. Serine/threonine-protein phosphatase 4 (PP4) occurs in different assemblies of the catalytic and one or more regulatory subunits. Component of the PP4 complex PPP4C-PPP4R2-PPP4R3B. In terms of tissue distribution, moderately expressed in tissues and specific brain regions examined.

The protein resides in the cytoplasm. The protein localises to the cytoskeleton. It is found in the microtubule organizing center. Its subcellular location is the centrosome. It localises to the nucleus. Functionally, regulatory subunit of serine/threonine-protein phosphatase 4 (PP4). May regulate the activity of PPP4C at centrosomal microtubule organizing centers. This Homo sapiens (Human) protein is Serine/threonine-protein phosphatase 4 regulatory subunit 3B.